The chain runs to 150 residues: Protein A151R (150 aa).

The protein belongs to the asfivirus A151R family. In terms of assembly, monomer. Homodimer. Interacts with protein B119L. Interacts with membrane protein E248R. Zn(2+) serves as cofactor.

May participate in a redox cascade for the formation of disulfide bonds in viral proteins. The sequence is that of Protein A151R from African swine fever virus (isolate Tick/Malawi/Lil 20-1/1983) (ASFV).